The chain runs to 195 residues: Neurturin (195 aa).

The first 19 residues, Met1–Ser19, serve as a signal peptide directing secretion. Residues Val20–Arg95 constitute a propeptide that is removed on maturation. Disulfide bonds link Cys101–Cys163, Cys128–Cys192, and Cys132–Cys194. Residues Arg147, Arg156, and Arg158 each coordinate heparan sulfate group.

Belongs to the TGF-beta family. GDNF subfamily. In terms of assembly, homodimer; disulfide-linked. Interacts with GFRA2 coreceptor and RET: forms a 2:2:2 ternary complex composed of NRTN ligand, GFRA2 and RET receptor. Also forms a 4:4:4 tetrameric complex composed of 4 copies of NRTN ligand, GFRA2 and RET receptor, which prevents endocytosis of RET. As to expression, widespread distribution.

The protein resides in the secreted. Its function is as follows. Growth factor that supports the survival of sympathetic neurons in culture. May regulate the development and maintenance of the CNS. Involved in the development of the neural crest. Might control the size of non-neuronal cell population such as haemopoietic cells. Acts by binding to its coreceptor, GFRA2, leading to autophosphorylation and activation of the RET receptor. Heparan sulfate-binding is required for signaling. The sequence is that of Neurturin (Nrtn) from Mus musculus (Mouse).